The following is a 732-amino-acid chain: Catalase-peroxidase (732 aa).

The tract at residues 1-23 (MSEQSKCPVTGRTAGHPVAGGGM) is disordered. A cross-link (tryptophyl-tyrosyl-methioninium (Trp-Tyr) (with M-246)) is located at residues 97–220 (WHSAGTYRTS…LAAVQMGLIY (124 aa)). H98 serves as the catalytic Proton acceptor. Positions 220–246 (YVNPEGPDGNPDPVAAGRDIRETFARM) form a cross-link, tryptophyl-tyrosyl-methioninium (Tyr-Met) (with W-97). H261 is a heme b binding site.

The protein belongs to the peroxidase family. Peroxidase/catalase subfamily. In terms of assembly, homodimer or homotetramer. Heme b serves as cofactor. Formation of the three residue Trp-Tyr-Met cross-link is important for the catalase, but not the peroxidase activity of the enzyme.

It catalyses the reaction H2O2 + AH2 = A + 2 H2O. It carries out the reaction 2 H2O2 = O2 + 2 H2O. Bifunctional enzyme with both catalase and broad-spectrum peroxidase activity. The sequence is that of Catalase-peroxidase from Chlorobium limicola (strain DSM 245 / NBRC 103803 / 6330).